A 966-amino-acid chain; its full sequence is Mitogen-activated protein kinase kinase kinase 13 (966 aa).

The disordered stretch occupies residues 1 to 59 (MANPQEHLSCSSSPRLPLSENKTFNGLQDDLAPMGSHASPKLLKDQQEKGMVQTELAEG). The segment covering 8-19 (LSCSSSPRLPLS) has biased composition (low complexity). The 242-residue stretch at 168–409 (ISELQWLGSG…FRQTLMHLDI (242 aa)) folds into the Protein kinase domain. Residues 174-182 (LGSGAQGAV) and Lys195 each bind ATP. Asp279 acts as the Proton acceptor in catalysis. Leucine-zipper regions lie at residues 433–454 (VKKH…DEEL) and 486–507 (LSAI…EQAV). Residues 457–496 (RRREELRHALDIREHYERKLERANNLYMELSAIMLQLEMR) adopt a coiled-coil conformation. Disordered regions lie at residues 561–663 (EVAP…GQDI), 743–874 (LDVP…DELA), and 937–966 (QFEE…SATW). A compositionally biased stretch (low complexity) spans 567–581 (SPLSGSPKLSSSSSK). Positions 582 to 594 (SRYRSKPRHRRGN) are enriched in basic residues. Residues 609 to 622 (QPAQEDSPHPTSLH) are compositionally biased toward polar residues. Positions 629–642 (PSSQHHNLLQQQYQ) are enriched in low complexity. A compositionally biased stretch (acidic residues) spans 814–827 (DSSEEEEGEVDSEV). The interval 815–828 (SSEEEEGEVDSEVE) is acidic. Polar residues predominate over residues 840–855 (SSCQSYSTFSSENFSV). Positions 939 to 950 (EESDCDSSDGEC) are enriched in acidic residues. Polar residues predominate over residues 954–966 (TVRTNKHYSSATW).

This sequence belongs to the protein kinase superfamily. Ser/Thr protein kinase family. Homodimer; forms dimers through the leucine-zipper motif. Interacts with the C-terminus of MAPK8IP1 through the kinase catalytic domain. Binds PRDX3. Associates with the IKK complex through the kinase domain. The cofactor is Mg(2+). In terms of processing, autophosphorylated on serine and threonine residues.

Its subcellular location is the cytoplasm. It localises to the membrane. It carries out the reaction L-seryl-[protein] + ATP = O-phospho-L-seryl-[protein] + ADP + H(+). The catalysed reaction is L-threonyl-[protein] + ATP = O-phospho-L-threonyl-[protein] + ADP + H(+). Its activity is regulated as follows. Activated by autophosphorylation and homodimerization. Its function is as follows. Activates the JUN N-terminal pathway through activation of the MAP kinase kinase MAP2K7. Acts synergistically with PRDX3 to regulate the activation of NF-kappa-B in the cytosol. This activation is kinase-dependent and involves activating the IKK complex, the IKBKB-containing complex that phosphorylates inhibitors of NF-kappa-B. The protein is Mitogen-activated protein kinase kinase kinase 13 (MAP3K13) of Bos taurus (Bovine).